Consider the following 237-residue polypeptide: MQMDIIQKLENGLIVSCQALEGEPLHSPFIMAKMAKAAEIGGAVAIRANGYEDIVAIKKEVSIPVIGLIKKRYEGYAPYITPTMEEVDKVIEAGADIVAIDATKAYKPGGLTTGEFLKRIKEKYPKILVMADISTYEEGIEAEKLGFDLISTTLSGYTEYSPELEGPDYELIERLARKVNVPIIAEGRIWTPEEAVKALEKGAYAVVVGTAITRPHEITRRFVTFIKERRYSNVRAK.

The protein belongs to the NanE family.

The catalysed reaction is an N-acyl-D-glucosamine 6-phosphate = an N-acyl-D-mannosamine 6-phosphate. It participates in amino-sugar metabolism; N-acetylneuraminate degradation; D-fructose 6-phosphate from N-acetylneuraminate: step 3/5. In terms of biological role, converts N-acetylmannosamine-6-phosphate (ManNAc-6-P) to N-acetylglucosamine-6-phosphate (GlcNAc-6-P). The chain is Putative N-acetylmannosamine-6-phosphate 2-epimerase from Caldanaerobacter subterraneus subsp. tengcongensis (strain DSM 15242 / JCM 11007 / NBRC 100824 / MB4) (Thermoanaerobacter tengcongensis).